The chain runs to 94 residues: UPF0298 protein SEQ_1830 (94 aa).

This sequence belongs to the UPF0298 family.

It localises to the cytoplasm. The chain is UPF0298 protein SEQ_1830 from Streptococcus equi subsp. equi (strain 4047).